Here is a 345-residue protein sequence, read N- to C-terminus: G-protein coupled receptor family C group 5 member D (345 aa).

Residues 1–27 (MYKDCIESTGDYFLLCDAEGPWGIILE) lie on the Extracellular side of the membrane. The helical transmembrane segment at 28 to 48 (SLAILGIVVTILLLLAFLFLM) threads the bilayer. Over 49 to 63 (RKIQDCSQWNVLPTQ) the chain is Cytoplasmic. The helical transmembrane segment at 64–84 (LLFLLSVLGLFGLAFAFIIEL) threads the bilayer. Over 85-93 (NQQTAPVRY) the chain is Extracellular. The chain crosses the membrane as a helical span at residues 94–114 (FLFGVLFALCFSCLLAHASNL). Topologically, residues 115–123 (VKLVRGCVS) are cytoplasmic. The chain crosses the membrane as a helical span at residues 124 to 144 (FSWTTILCIAIGCSLLQIIIA). At 145-167 (TEYVTLIMTRGMMFVNMTPCQLN) the chain is on the extracellular side. Residues 168–188 (VDFVVLLVYVLFLMALTFFVS) form a helical membrane-spanning segment. Residues 189-204 (KATFCGPCENWKQHGR) lie on the Cytoplasmic side of the membrane. Residues 205–225 (LIFITVLFSIIIWVVWISMLL) form a helical membrane-spanning segment. The Extracellular portion of the chain corresponds to 226–239 (RGNPQFQRQPQWDD). A helical transmembrane segment spans residues 240 to 260 (PVVCIALVTNAWVFLLLYIVP). The Cytoplasmic portion of the chain corresponds to 261-345 (ELCILYRSCR…LSPQQDAGGV (85 aa)).

Belongs to the G-protein coupled receptor 3 family. In terms of assembly, homodimer. As to expression, widely expressed in the peripheral system. Expression pattern is high in pancreas, medium in kidney, small intestine, spleen and testis, low in lung, colon, leukocyte, prostate and thymus and not detectable in brain, heart, liver, placenta, skeletal muscle and ovary.

The protein localises to the cell membrane. G-protein coupled receptor involved in hard keratin expression and likely plays a role in the development of hair and nails. The chain is G-protein coupled receptor family C group 5 member D (GPRC5D) from Homo sapiens (Human).